The following is a 1875-amino-acid chain: Nonribosomal peptide synthetase otaB (1875 aa).

Positions 202–590 are adenylation 1; that stretch reads GQVRENGDRA…SIRFAGRRQA (389 aa). The Carrier domain occupies 724–800; that stretch reads SPMTAAERVM…DLVAHIKDAG (77 aa). Residue serine 761 is modified to O-(pantetheine 4'-phosphoryl)serine. Positions 836-1245 are condensation; that stretch reads EDVYPCTTLQ…LVSPLDEERL (410 aa). Positions 1264-1659 are adenylation 2; it reads QKQSYAQPQA…ARKDTQVKIR (396 aa).

Belongs to the NRP synthetase family.

It catalyses the reaction 7-carboxymellein + L-phenylalanine + ATP = ochratoxin B + ADP + phosphate + H(+). The protein operates within mycotoxin biosynthesis. Nonribosomal peptide synthetase; part of the gene cluster that mediates the biosynthesis of ochratoxin A (OTA), a mycotoxin composed of a chlorinated type I polyketide dihydroisocoumarin moiety linked to L-phenylalanine, and demonstrated to have nephrotoxic, immunotoxic, genotoxic, neurotoxic, and teratogenic properties. OtaB is responsible for the linking of phenylalanine to the dihydroisocoumarin ring. The pathway begins with the highly reducing polyketide synthase otaA that catalyzes the formation of the isocoumarin group during the initial stages of biosynthesis, starting from one acetate and 4 malonate units, to originate the characteristic pentaketide skeleton 7-methylmellein (7-MM) of the OTA molecule. The newly identified cyclase otaY might be involved in the polyketide cyclization reaction during the initial steps of the OTA biosynthesis. 7-MM is then oxidized into 7-carboxymellein (also called ochratoxin beta) by the cytochrome P450 monooxygenase otaC. The NRPS encoded by the otaB gene is involved in the linking of phenylalanine to the dihydroisocoumarin ring. The reaction catalyzed by NRPS results in the production of ochratoxin B (OTB), which is the non-chlorinated analog of OTA and which subsequently serves as the substrate of the halogenase otaD for chlorination activity to form the final molecular structure of OTA, containing a chlorine atom in the C-5 position of the molecule. This chain is Nonribosomal peptide synthetase otaB, found in Aspergillus carbonarius (strain ITEM 5010).